The following is a 119-amino-acid chain: Ribonuclease P protein component (119 aa).

Belongs to the RnpA family. In terms of assembly, consists of a catalytic RNA component (M1 or rnpB) and a protein subunit.

The enzyme catalyses Endonucleolytic cleavage of RNA, removing 5'-extranucleotides from tRNA precursor.. Functionally, RNaseP catalyzes the removal of the 5'-leader sequence from pre-tRNA to produce the mature 5'-terminus. It can also cleave other RNA substrates such as 4.5S RNA. The protein component plays an auxiliary but essential role in vivo by binding to the 5'-leader sequence and broadening the substrate specificity of the ribozyme. This is Ribonuclease P protein component from Streptococcus equi subsp. zooepidemicus (strain MGCS10565).